The primary structure comprises 596 residues: Elongation factor 4 (596 aa).

In terms of domain architecture, tr-type G spans Lys2–Glu184. GTP-binding positions include Asp14–Thr19 and Asn131–Asp134.

Belongs to the TRAFAC class translation factor GTPase superfamily. Classic translation factor GTPase family. LepA subfamily.

Its subcellular location is the cell inner membrane. The enzyme catalyses GTP + H2O = GDP + phosphate + H(+). Functionally, required for accurate and efficient protein synthesis under certain stress conditions. May act as a fidelity factor of the translation reaction, by catalyzing a one-codon backward translocation of tRNAs on improperly translocated ribosomes. Back-translocation proceeds from a post-translocation (POST) complex to a pre-translocation (PRE) complex, thus giving elongation factor G a second chance to translocate the tRNAs correctly. Binds to ribosomes in a GTP-dependent manner. This Shewanella halifaxensis (strain HAW-EB4) protein is Elongation factor 4.